The chain runs to 581 residues: MPLKHYLLLLVGCQAWGAGLAYHGCPSECTCSRASQVECTGARIVAVPTPLPWNAMSLQILNTHITELNESPFLNISALIALRIEKNELSRITPGAFRNLGSLRYLSLANNKLQVLPIGLFQGLDSLESLLLSSNQLLQIQPAHFSQCSNLKELQLHGNHLEYIPDGAFDHLVGLTKLNLGKNSLTHISPRVFQHLGNLQVLRLYENRLTDIPMGTFDGLVNLQELALQQNQIGLLSPGLFHNNHNLQRLYLSNNHISQLPPSVFMQLPQLNRLTLFGNSLKELSPGIFGPMPNLRELWLYDNHISSLPDNVFSNLRQLQVLILSRNQISFISPGAFNGLTELRELSLHTNALQDLDGNVFRMLANLQNISLQNNRLRQLPGNIFANVNGLMAIQLQNNQLENLPLGIFDHLGKLCELRLYDNPWRCDSDILPLRNWLLLNQPRLGTDTVPVCFSPANVRGQSLIIINVNVAVPSVHVPEVPSYPETPWYPDTPSYPDTTSVSSTTELTSPVEDYTDLTTIQVTDDRSVWGMTQAQSGLAIAAIVIGIVALACSLAACVGCCCCKKRSQAVLMQMKAPNEC.

An N-terminal signal peptide occupies residues M1 to A21. Residues Y22–W53 form the LRRNT domain. Residues Y22–G538 lie on the Extracellular side of the membrane. LRR repeat units follow at residues N54–N75, A78–N99, S102–G123, S126–Q147, N150–H171, G174–H195, N198–G219, N222–N243, N246–Q267, Q270–P291, N294–N315, Q318–G339, E342–M363, N366–N387, and G390–H411. N75 carries N-linked (GlcNAc...) asparagine glycosylation. N369 carries an N-linked (GlcNAc...) asparagine glycan. One can recognise an LRRCT domain in the interval N423–S475. Residues W489–T509 form a disordered region. The segment covering T499 to T509 has biased composition (low complexity). A helical transmembrane segment spans residues L539–V559. Over G560–C581 the chain is Cytoplasmic.

(Microbial infection) Interacts with human coronavirus SARS-CoV-2 spike protein (via RBD domain); the interaction is direct and sequesters virions at the cell surface. As to quaternary structure, (Microbial infection) Interacts with human coronavirus SARS-CoV-2 spike protein (via RBD domain); the interaction is direct. Expressed in brain and placenta. Expressed in lung fibroblasts. Expressed in chodrocytes.

The protein resides in the cell membrane. Its function is as follows. (Microbial infection) Modulates the ability of SARS-CoV-2 to infect host cells through interaction with the spike protein. Does not act as a SARS-CoV-2 entry receptor but sequesters virions and antagonizes in trans SARS-CoV-2 infection of ACE2(+) cells when expressed on nearby cells. This Homo sapiens (Human) protein is Leucine-rich repeat-containing protein 15 (LRRC15).